The following is a 69-amino-acid chain: Small ribosomal subunit protein uS7 (69 aa).

It belongs to the universal ribosomal protein uS7 family. As to quaternary structure, part of the 30S ribosomal subunit.

In terms of biological role, one of the primary rRNA binding proteins, it binds directly to 16S rRNA where it nucleates assembly of the head domain of the 30S subunit. Is located at the subunit interface close to the decoding center. This chain is Small ribosomal subunit protein uS7 (rps7), found in Methanococcoides methylutens.